A 625-amino-acid polypeptide reads, in one-letter code: MSWRSNAQRTGMNAQPLQGARRWGGAGGAGEGPSSSGSPPSSYHQPSHPYQSSYSHQSQPYNAAPAPPTSSSSSSSNPRDAALAAAAAVAASIGIKRDRDRSSDAPGSNSYAAPSLLTSASTADGSGADAGPRKRKSRWGDANDKITIPTAIGANVSAQELDKYAIQVRLDEISRKLRSGDFVPPDRERSPSPPPTYDNQGRRTNTREVRYRKKLEDERVALVDRQLKLDPNFRPPSDYHAIKRNQRPTEKVYLPIKEFPEIKFFGLLVGPRGNTLKTMERQSGAKISIRGKGSVKTGKGKMDADEDEEEMHCVVTADDEASVKKCIKLINQVIETAASTPEGENDHKRNQLRELAALNGTLRDDENQLCKNCGNKGHRAFECPEQRNWTAHIICHRCGGQGHLARDCTQGRAGAFNGAPPGAAGTGNRQFDSEYANLMAELGEPAAAVDGAATAAGGAVGGAAVGPDGKKIPPWRNPEVWSQPGFGAPRGGDAGRGGWGHRGGYNNRGDRAGYNQHQQQQHPHAYHQQQQAYPAYDQSAPTAAPGGAENADQQHRDYSAEWAAYYAAQAAAGGAQGADPSAAAAGTTAAAEGAVDYSKEWEEYYRMQAAAAAQDGSAYAAGTQA.

A compositionally biased stretch (polar residues) spans 1-16 (MSWRSNAQRTGMNAQP). Disordered regions lie at residues 1 to 154 (MSWR…AIGA) and 177 to 206 (LRSG…RTNT). The span at 22 to 31 (RWGGAGGAGE) shows a compositional bias: gly residues. Composition is skewed to low complexity over residues 32-61 (GPSS…SQPY), 70-91 (SSSS…AVAA), and 110-130 (SYAA…GADA). Basic and acidic residues predominate over residues 177 to 190 (LRSGDFVPPDRERS). Residues 253 to 330 (YLPIKEFPEI…ASVKKCIKLI (78 aa)) enclose the KH domain. CCHC-type zinc fingers lie at residues 368–385 (QLCK…ECPE) and 393–410 (IICH…DCTQ). Residues 466-533 (GPDGKKIPPW…HAYHQQQQAY (68 aa)) form a disordered region. Residues 488-503 (APRGGDAGRGGWGHRG) show a composition bias toward gly residues. Positions 516 to 533 (QHQQQQHPHAYHQQQQAY) are enriched in low complexity.

It belongs to the BBP/SF1 family.

It is found in the nucleus. Necessary for the splicing of pre-mRNA. Has a role in the recognition of the branch site (5'-UACUAAC-3'), the pyrimidine tract and the 3'-splice site at the 3'-end of introns. The protein is Branchpoint-bridging protein (BBP) of Mycosarcoma maydis (Corn smut fungus).